Consider the following 749-residue polypeptide: Homeobox-leucine zipper protein ROC7 (749 aa).

The segment at 26–98 is disordered; it reads LDQHQQHQHQ…KKRYHRHTQH (73 aa). Residues 46-57 show a composition bias toward basic and acidic residues; that stretch reads SDGRAPRDELEM. The span at 68–78 shows a compositional bias: gly residues; sequence SGGGGGGGGSG. Residues 86 to 97 are compositionally biased toward basic residues; sequence RPRKKRYHRHTQ. Residues 88-147 constitute a DNA-binding region (homeobox); it reads RKKRYHRHTQHQIQELEAFFKECPHPDDKQRKELSRELGLEPLQVKFWFQNKRTQMKTQH. Residues 137-218 adopt a coiled-coil conformation; that stretch reads QNKRTQMKTQ…DRISAIAAKY (82 aa). An START domain is found at 256–494; sequence ADFDKPLVIE…LERQCERLAS (239 aa).

The protein belongs to the HD-ZIP homeobox family. Class IV subfamily.

The protein localises to the nucleus. In terms of biological role, probable transcription factor. In Oryza sativa subsp. indica (Rice), this protein is Homeobox-leucine zipper protein ROC7 (ROC7).